A 601-amino-acid polypeptide reads, in one-letter code: Glutathione-regulated potassium-efflux system protein KefB (601 aa).

13 helical membrane-spanning segments follow: residues 4–24 (ADLL…VPLA), 29–49 (IGAV…GLGF), 55–75 (EILH…GLEL), 87–107 (IFGV…GLLM), 111–131 (FLWQ…TAMA), 152–172 (VLLF…LLAG), 177–197 (HFDW…LIGG), 207–227 (FIAA…LVLS), 230–250 (LFMD…GVLL), 262–282 (AIDP…GMSL), 284–304 (LGVL…LVVI), 324–344 (MQFA…FSTA), and 356–376 (ALLL…MKGI). Positions 400-519 (KPQVIVVGFG…AGVTQFSRET (120 aa)) constitute an RCK N-terminal domain.

The protein belongs to the monovalent cation:proton antiporter 2 (CPA2) transporter (TC 2.A.37) family. KefB subfamily. As to quaternary structure, interacts with the regulatory subunit KefG.

It localises to the cell inner membrane. Pore-forming subunit of a potassium efflux system that confers protection against electrophiles. Catalyzes K(+)/H(+) antiport. The protein is Glutathione-regulated potassium-efflux system protein KefB of Salmonella paratyphi B (strain ATCC BAA-1250 / SPB7).